Reading from the N-terminus, the 240-residue chain is EF-hand domain-containing protein D2 (240 aa).

An N-acetylalanine modification is found at alanine 2. Serine 11 carries the post-translational modification Phosphoserine. The disordered stretch occupies residues 13 to 38 (RLQMEGEGGGETPEQPGLNGAAAAAA). Residues serine 74 and serine 76 each carry the phosphoserine modification. Tyrosine 83 is modified (phosphotyrosine). EF-hand domains lie at 92-127 (KQIK…LGAP) and 128-163 (QTHL…AAAG). Positions 105, 109, 116, 141, 143, 145, 147, and 152 each coordinate Ca(2+). Lysine 233 carries the post-translational modification N6-acetyllysine.

Interacts with CASP9; with inactive form. Found in lymphocytes; preferentially expressed in CD8+ cells.

The protein localises to the membrane raft. In terms of biological role, may regulate B-cell receptor (BCR)-induced immature and primary B-cell apoptosis. Plays a role as negative regulator of the canonical NF-kappa-B-activating branch. Controls spontaneous apoptosis through the regulation of BCL2L1 abundance. The chain is EF-hand domain-containing protein D2 (EFHD2) from Homo sapiens (Human).